Reading from the N-terminus, the 496-residue chain is Cytochrome P450 3A30 (496 aa).

Cysteine 441 provides a ligand contact to heme.

This sequence belongs to the cytochrome P450 family. The cofactor is heme. As to expression, highly expressed in liver and intestine. Moderate expression in gill and spleen. Low expression in kidney, brain and heart.

The protein resides in the endoplasmic reticulum membrane. The protein localises to the microsome membrane. It catalyses the reaction an organic molecule + reduced [NADPH--hemoprotein reductase] + O2 = an alcohol + oxidized [NADPH--hemoprotein reductase] + H2O + H(+). Its function is as follows. Putative steroid 6-beta-hydroxylase. This Fundulus heteroclitus (Killifish) protein is Cytochrome P450 3A30 (cyp3a30).